Reading from the N-terminus, the 308-residue chain is tRNA dimethylallyltransferase (308 aa).

11–18 is a binding site for ATP; the sequence is GSTATGKS. Substrate is bound at residue 13–18; it reads TATGKS. Residues 36–39 are interaction with substrate tRNA; it reads DSVQ.

The protein belongs to the IPP transferase family. In terms of assembly, monomer. The cofactor is Mg(2+).

It carries out the reaction adenosine(37) in tRNA + dimethylallyl diphosphate = N(6)-dimethylallyladenosine(37) in tRNA + diphosphate. Catalyzes the transfer of a dimethylallyl group onto the adenine at position 37 in tRNAs that read codons beginning with uridine, leading to the formation of N6-(dimethylallyl)adenosine (i(6)A). The sequence is that of tRNA dimethylallyltransferase from Bdellovibrio bacteriovorus (strain ATCC 15356 / DSM 50701 / NCIMB 9529 / HD100).